A 136-amino-acid chain; its full sequence is NHL-repeat-containing protein 4 (136 aa).

NHL repeat units follow at residues Gln48–Val91 and Pro93–Leu132.

In Mus musculus (Mouse), this protein is NHL-repeat-containing protein 4 (Nhlrc4).